Here is a 134-residue protein sequence, read N- to C-terminus: D-ribose pyranase (134 aa).

His20 acts as the Proton donor in catalysis. Residues Asp28, His99, and 123-125 (YSN) contribute to the substrate site.

The protein belongs to the RbsD / FucU family. RbsD subfamily. Homodecamer.

Its subcellular location is the cytoplasm. It carries out the reaction beta-D-ribopyranose = beta-D-ribofuranose. It participates in carbohydrate metabolism; D-ribose degradation; D-ribose 5-phosphate from beta-D-ribopyranose: step 1/2. Catalyzes the interconversion of beta-pyran and beta-furan forms of D-ribose. This Staphylococcus aureus (strain Mu3 / ATCC 700698) protein is D-ribose pyranase.